The primary structure comprises 303 residues: Diaminopimelate epimerase (303 aa).

Residues Asn-15 and Asn-72 each contribute to the substrate site. Cys-81 serves as the catalytic Proton donor. Residues 82-83 (GN), Asn-169, Asn-202, and 220-221 (ER) each bind substrate. Catalysis depends on Cys-229, which acts as the Proton acceptor. 230–231 (GT) lines the substrate pocket.

This sequence belongs to the diaminopimelate epimerase family. Homodimer.

The protein localises to the cytoplasm. It catalyses the reaction (2S,6S)-2,6-diaminopimelate = meso-2,6-diaminopimelate. It functions in the pathway amino-acid biosynthesis; L-lysine biosynthesis via DAP pathway; DL-2,6-diaminopimelate from LL-2,6-diaminopimelate: step 1/1. Its function is as follows. Catalyzes the stereoinversion of LL-2,6-diaminopimelate (L,L-DAP) to meso-diaminopimelate (meso-DAP), a precursor of L-lysine and an essential component of the bacterial peptidoglycan. In Prochlorococcus marinus (strain MIT 9313), this protein is Diaminopimelate epimerase.